Consider the following 215-residue polypeptide: Protein-L-isoaspartate O-methyltransferase (215 aa).

The active site involves serine 62.

It belongs to the methyltransferase superfamily. L-isoaspartyl/D-aspartyl protein methyltransferase family.

Its subcellular location is the cytoplasm. The enzyme catalyses [protein]-L-isoaspartate + S-adenosyl-L-methionine = [protein]-L-isoaspartate alpha-methyl ester + S-adenosyl-L-homocysteine. In terms of biological role, catalyzes the methyl esterification of L-isoaspartyl residues in peptides and proteins that result from spontaneous decomposition of normal L-aspartyl and L-asparaginyl residues. It plays a role in the repair and/or degradation of damaged proteins. This chain is Protein-L-isoaspartate O-methyltransferase, found in Rhodopseudomonas palustris (strain BisA53).